The primary structure comprises 270 residues: 3-methyl-2-oxobutanoate hydroxymethyltransferase (270 aa).

The Mg(2+) site is built by aspartate 43 and aspartate 82. Residues 43–44 (DS), aspartate 82, and lysine 112 each bind 3-methyl-2-oxobutanoate. Residue glutamate 114 participates in Mg(2+) binding. The active-site Proton acceptor is the glutamate 179.

It belongs to the PanB family. As to quaternary structure, homodecamer; pentamer of dimers. Mg(2+) serves as cofactor.

The protein localises to the cytoplasm. The catalysed reaction is 3-methyl-2-oxobutanoate + (6R)-5,10-methylene-5,6,7,8-tetrahydrofolate + H2O = 2-dehydropantoate + (6S)-5,6,7,8-tetrahydrofolate. The protein operates within cofactor biosynthesis; (R)-pantothenate biosynthesis; (R)-pantoate from 3-methyl-2-oxobutanoate: step 1/2. Its function is as follows. Catalyzes the reversible reaction in which hydroxymethyl group from 5,10-methylenetetrahydrofolate is transferred onto alpha-ketoisovalerate to form ketopantoate. In Oceanobacillus iheyensis (strain DSM 14371 / CIP 107618 / JCM 11309 / KCTC 3954 / HTE831), this protein is 3-methyl-2-oxobutanoate hydroxymethyltransferase.